The sequence spans 121 residues: Large ribosomal subunit protein bL20 (121 aa).

Belongs to the bacterial ribosomal protein bL20 family.

In terms of biological role, binds directly to 23S ribosomal RNA and is necessary for the in vitro assembly process of the 50S ribosomal subunit. It is not involved in the protein synthesizing functions of that subunit. The sequence is that of Large ribosomal subunit protein bL20 from Francisella tularensis subsp. mediasiatica (strain FSC147).